Here is a 1146-residue protein sequence, read N- to C-terminus: Ankyrin repeat domain-containing protein 24 (1146 aa).

ANK repeat units follow at residues 81–110 (EGKSAFHLAAMRGAASCLEVMIAHGSNVMS), 114–143 (AGYNALHLAAKYGHPQCLKQLLQASCVVDV), 147–176 (SGWTALHHAAAGGCLSCSEVLCSFKAHLNP), 180–209 (SGATPLIIAAQMCHTDLCRLLLQQGAAAND), and 213–242 (QGRTALMLACEGASPETVEVLLQGGAQPGI). Disordered regions lie at residues 272–320 (RPSP…PDDR), 607–627 (REMETTEEEANMETKPTGAQA), and 766–785 (ERVREAEGSGASGGGGGDTT). Over residues 286–297 (EASSQNSMSSHG) the composition is skewed to polar residues. Positions 320–517 (RDAYEEIVRL…QALRQQETRE (198 aa)) form a coiled coil. The stretch at 714–1110 (AAEASEKLQV…AARDHSSVVA (397 aa)) forms a coiled coil.

In terms of assembly, homodimer. Interacts (via C-terminal domain) with TRIOBP (via C-terminal domain) isoform 4; recruits TRIOBP isoform 4 to stereocilia rootlets.

Its subcellular location is the cell membrane. It is found in the cell projection. The protein resides in the stereocilium. Functionally, component of the stereocilia rootlet in hair cells of inner ear. Bridges the apical plasma membrane with the lower rootlet and maintains normal distribution of TRIOBP, thereby reinforcing stereocilia insertion points and organizing rootlets for hearing with long-term resilience. The protein is Ankyrin repeat domain-containing protein 24 of Homo sapiens (Human).